The chain runs to 286 residues: E3 ubiquitin-protein ligase SINA-like 7 (286 aa).

Residues 51 to 87 (CPICYEAFTIPIFQCDNGHLACSSCCPKLNNKCPACT) form an RING-type zinc finger. Residues 101 to 285 (VLESILIPCP…MRISVKKLNK (185 aa)) are SBD. The SIAH-type zinc-finger motif lies at 104–162 (SILIPCPNAKLGCKKNVSYGKELTHEKECMFSHCACPALDCNYTSSYKDLYTHYRITHM). Zn(2+)-binding residues include Cys109, Cys116, His128, Cys132, Cys139, Cys144, His156, and His161.

This sequence belongs to the SINA (Seven in absentia) family.

It carries out the reaction S-ubiquitinyl-[E2 ubiquitin-conjugating enzyme]-L-cysteine + [acceptor protein]-L-lysine = [E2 ubiquitin-conjugating enzyme]-L-cysteine + N(6)-ubiquitinyl-[acceptor protein]-L-lysine.. It participates in protein modification; protein ubiquitination. Functionally, E3 ubiquitin-protein ligase that mediates ubiquitination and subsequent proteasomal degradation of target proteins. E3 ubiquitin ligases accept ubiquitin from an E2 ubiquitin-conjugating enzyme in the form of a thioester and then directly transfers the ubiquitin to targeted substrates. It probably triggers the ubiquitin-mediated degradation of different substrates. The chain is E3 ubiquitin-protein ligase SINA-like 7 from Arabidopsis thaliana (Mouse-ear cress).